A 314-amino-acid polypeptide reads, in one-letter code: Vacuolar membrane protein VL3_4134 (314 aa).

Residues 32–60 (KPTSSVVSETSSKSLPSLTSSAFSTSSGA) form a disordered region. Residues 93–113 (VYIAVGAVIGAIFISILIWWL) traverse the membrane as a helical segment. A phosphoserine mark is found at S148, S254, and S274. Positions 240–309 (EERKLNLNRP…PSMFLDDVLN (70 aa)) are disordered. Residues 254–269 (SPERKEKKINSMEGYH) are compositionally biased toward basic and acidic residues.

It belongs to the PRM5 family.

Its subcellular location is the vacuole membrane. The sequence is that of Vacuolar membrane protein VL3_4134 from Saccharomyces cerevisiae (strain Zymaflore VL3) (Baker's yeast).